The primary structure comprises 158 residues: GTP-dependent dephospho-CoA kinase (158 aa).

Positions 35, 36, 54, 56, 109, and 132 each coordinate GTP.

It belongs to the GTP-dependent DPCK family.

It catalyses the reaction 3'-dephospho-CoA + GTP = GDP + CoA + H(+). It participates in cofactor biosynthesis; coenzyme A biosynthesis. In terms of biological role, catalyzes the GTP-dependent phosphorylation of the 3'-hydroxyl group of dephosphocoenzyme A to form coenzyme A (CoA). This Methanococcus maripaludis (strain C5 / ATCC BAA-1333) protein is GTP-dependent dephospho-CoA kinase.